We begin with the raw amino-acid sequence, 372 residues long: Envelope phospholipase OPG057 (372 aa).

A YPPL motif is present at residues 153–156 (YPPL). S-palmitoyl cysteine; by host attachment occurs at residues Cys185 and Cys186. One can recognise a PLD phosphodiesterase domain in the interval 307–334 (FTIQNNTKLLIVDDEYVHITSANFDGTH).

This sequence belongs to the orthopoxvirus OPG057 family. In terms of assembly, interacts with protein OPG190. Post-translationally, palmitoylated. Attachment of the palmitate moiety is essential for correct intracellular targeting and protein function.

Its subcellular location is the virion membrane. The protein localises to the host Golgi apparatus. It localises to the host trans-Golgi network. The protein resides in the host endoplasmic reticulum membrane. The catalysed reaction is a 1,2-diacyl-sn-glycero-3-phosphocholine + H2O = a 1,2-diacyl-sn-glycero-3-phosphate + choline + H(+). Its function is as follows. Major envelope protein that plays a role in the biogenesis of the viral double membrane and in egress of virus from the host cell. Produces the wrapped form of virus that is required for cell-to-cell spread. Acts as a lipase with broad specificity including phospholipase C, phospholipase A, and triacylglycerol lipase activities. In Vaccinia virus (strain Copenhagen) (VACV), this protein is Envelope phospholipase OPG057 (OPG057).